Consider the following 361-residue polypeptide: Queuine tRNA-ribosyltransferase (361 aa).

The Proton acceptor role is filled by Asp-89. Substrate is bound by residues 89 to 93, Asp-143, Gln-185, and Gly-212; that span reads DSGGF. The RNA binding stretch occupies residues 243 to 249; it reads GVGTPED. Residue Asp-262 is the Nucleophile of the active site. The segment at 267–271 is RNA binding; important for wobble base 34 recognition; the sequence is TRNAR. Cys-300, Cys-302, Cys-305, and His-331 together coordinate Zn(2+).

This sequence belongs to the queuine tRNA-ribosyltransferase family. In terms of assembly, homodimer. Within each dimer, one monomer is responsible for RNA recognition and catalysis, while the other monomer binds to the replacement base PreQ1. The cofactor is Zn(2+).

The catalysed reaction is 7-aminomethyl-7-carbaguanine + guanosine(34) in tRNA = 7-aminomethyl-7-carbaguanosine(34) in tRNA + guanine. It functions in the pathway tRNA modification; tRNA-queuosine biosynthesis. Catalyzes the base-exchange of a guanine (G) residue with the queuine precursor 7-aminomethyl-7-deazaguanine (PreQ1) at position 34 (anticodon wobble position) in tRNAs with GU(N) anticodons (tRNA-Asp, -Asn, -His and -Tyr). Catalysis occurs through a double-displacement mechanism. The nucleophile active site attacks the C1' of nucleotide 34 to detach the guanine base from the RNA, forming a covalent enzyme-RNA intermediate. The proton acceptor active site deprotonates the incoming PreQ1, allowing a nucleophilic attack on the C1' of the ribose to form the product. After dissociation, two additional enzymatic reactions on the tRNA convert PreQ1 to queuine (Q), resulting in the hypermodified nucleoside queuosine (7-(((4,5-cis-dihydroxy-2-cyclopenten-1-yl)amino)methyl)-7-deazaguanosine). This chain is Queuine tRNA-ribosyltransferase, found in Nitrosomonas eutropha (strain DSM 101675 / C91 / Nm57).